A 383-amino-acid polypeptide reads, in one-letter code: Acetylornithine deacetylase (383 aa).

Position 80 (His-80) interacts with Zn(2+). The active site involves Asp-82. Asp-112 lines the Zn(2+) pocket. Glu-144 is an active-site residue. Glu-145, Glu-169, and His-355 together coordinate Zn(2+).

This sequence belongs to the peptidase M20A family. ArgE subfamily. Homodimer. Requires Zn(2+) as cofactor. Co(2+) serves as cofactor. It depends on glutathione as a cofactor.

The protein resides in the cytoplasm. The catalysed reaction is N(2)-acetyl-L-ornithine + H2O = L-ornithine + acetate. The protein operates within amino-acid biosynthesis; L-arginine biosynthesis; L-ornithine from N(2)-acetyl-L-ornithine (linear): step 1/1. Catalyzes the hydrolysis of the amide bond of N(2)-acetylated L-amino acids. Cleaves the acetyl group from N-acetyl-L-ornithine to form L-ornithine, an intermediate in L-arginine biosynthesis pathway, and a branchpoint in the synthesis of polyamines. This chain is Acetylornithine deacetylase, found in Salmonella heidelberg (strain SL476).